A 156-amino-acid chain; its full sequence is uncharacterized protein (156 aa).

H55 is a catalytic residue.

Belongs to the thioester dehydratase family. FabZ subfamily.

This is an uncharacterized protein from Halalkalibacterium halodurans (strain ATCC BAA-125 / DSM 18197 / FERM 7344 / JCM 9153 / C-125) (Bacillus halodurans).